Consider the following 33-residue polypeptide: Photosystem II reaction center protein T (33 aa).

The helical transmembrane segment at 3 to 23 threads the bilayer; the sequence is ALVYTFLLVSTLGIIFFAIFF.

Belongs to the PsbT family. In terms of assembly, PSII is composed of 1 copy each of membrane proteins PsbA, PsbB, PsbC, PsbD, PsbE, PsbF, PsbH, PsbI, PsbJ, PsbK, PsbL, PsbM, PsbT, PsbY, PsbZ, Psb30/Ycf12, at least 3 peripheral proteins of the oxygen-evolving complex and a large number of cofactors. It forms dimeric complexes.

The protein localises to the plastid. The protein resides in the chloroplast thylakoid membrane. Found at the monomer-monomer interface of the photosystem II (PS II) dimer, plays a role in assembly and dimerization of PSII. PSII is a light-driven water plastoquinone oxidoreductase, using light energy to abstract electrons from H(2)O, generating a proton gradient subsequently used for ATP formation. The chain is Photosystem II reaction center protein T from Helianthus annuus (Common sunflower).